Consider the following 279-residue polypeptide: DegV domain-containing protein spr1019 (279 aa).

The 274-residue stretch at 4 to 277 (IKIVTDSSVT…ENAWAILIRY (274 aa)) folds into the DegV domain. Residues T62 and S94 each contribute to the hexadecanoate site.

In terms of biological role, may bind long-chain fatty acids, such as palmitate, and may play a role in lipid transport or fatty acid metabolism. The chain is DegV domain-containing protein spr1019 from Streptococcus pneumoniae (strain ATCC BAA-255 / R6).